We begin with the raw amino-acid sequence, 183 residues long: Acyl-homoserine-lactone synthase (183 aa).

Belongs to the autoinducer synthase family.

It carries out the reaction a fatty acyl-[ACP] + S-adenosyl-L-methionine = an N-acyl-L-homoserine lactone + S-methyl-5'-thioadenosine + holo-[ACP] + H(+). Functionally, involved in the synthesis of the acyl-homoserine lactone (AHL) signal N-(3-hydroxydodecanoyl)-L-HSL (3-hydroxy-C(12)-HSL or OH-dDHL). Probably part of a quorum-sensing system with AnoR. This Acinetobacter nosocomialis protein is Acyl-homoserine-lactone synthase.